The following is a 1048-amino-acid chain: NACHT, LRR and PYD domains-containing protein 8 (1048 aa).

Positions 1 to 23 (MSDVNPPSDTPIPFSSSSTHSSH) are disordered. Residues 11–23 (PIPFSSSSTHSSH) are compositionally biased toward low complexity. The Pyrin domain occupies 33-131 (PGSPCENGVM…NAILPTLEPE (99 aa)). One can recognise an NACHT domain in the interval 204 to 527 (KTVAIQGAPG…FYVLCFPQRL (324 aa)). Residue 210–217 (GAPGIGKT) participates in ATP binding. LRR repeat units lie at residues 815-838 (NGHL…YLSV), 839-861 (AQLE…SLAS), 866-890 (SKML…IWNA), 923-950 (NKTL…ALKN), and 980-1007 (NQHL…AFSS). The interval 1029-1048 (PTPHPPDFTGKSDCLSQINP) is disordered.

This sequence belongs to the NLRP family.

It localises to the cytoplasm. In terms of biological role, involved in inflammation. The sequence is that of NACHT, LRR and PYD domains-containing protein 8 (NLRP8) from Homo sapiens (Human).